We begin with the raw amino-acid sequence, 2729 residues long: Protein NO VEIN (2729 aa).

The disordered stretch occupies residues 1–27 (MQGNHDGSWSLHPSTNNGSGRANGNIN). 2 short sequence motifs (nuclear localization signal) span residues 194-201 (KRKVDVLR) and 473-480 (MKRLGGSN). Disordered regions lie at residues 477 to 517 (GGSN…IPKL) and 2482 to 2515 (LPSS…DVTE). Composition is skewed to basic and acidic residues over residues 488 to 497 (RNHEKSDSSK) and 2496 to 2515 (NTDD…DVTE).

In terms of tissue distribution, specifically expressed in developing embryos, leaf primordia, and shoot and root apical meristems.

It localises to the nucleus. In terms of biological role, essential protein required for cell fate determination during embryogenesis. Mediates auxin-dependent coordinated cell-fate specification and patterning in embryos (e.g. cotyledon outgrowth and separation), shoots and roots (e.g. leaf vascular development, cellular patterning and stem cell maintenance in the meristems). Required for provascular PIN1 expression and region-specific expression of PIN7 in leaf primordia, cell type-specific expression of PIN3, PIN4, and PIN7 in the root, and PIN2 polarity in the root cortex. The chain is Protein NO VEIN from Arabidopsis thaliana (Mouse-ear cress).